Consider the following 340-residue polypeptide: Heat-inducible transcription repressor HrcA (340 aa).

This sequence belongs to the HrcA family.

Its function is as follows. Negative regulator of class I heat shock genes (grpE-dnaK-dnaJ and groELS operons). Prevents heat-shock induction of these operons. The polypeptide is Heat-inducible transcription repressor HrcA (Burkholderia cenocepacia (strain ATCC BAA-245 / DSM 16553 / LMG 16656 / NCTC 13227 / J2315 / CF5610) (Burkholderia cepacia (strain J2315))).